The following is a 308-amino-acid chain: ADP-L-glycero-D-manno-heptose-6-epimerase (308 aa).

NADP(+) contacts are provided by residues 10-11 (MI), 31-32 (DN), Lys38, Lys53, 75-79 (EGACS), and Asn92. Catalysis depends on Tyr140, which acts as the Proton acceptor. Residue Lys144 participates in NADP(+) binding. Asn169 contributes to the substrate binding site. The NADP(+) site is built by Val170 and Lys178. Lys178 functions as the Proton acceptor in the catalytic mechanism. Residues Ser180, His187, 201 to 204 (FEGS), Arg209, and Tyr272 each bind substrate.

This sequence belongs to the NAD(P)-dependent epimerase/dehydratase family. HldD subfamily. In terms of assembly, homopentamer. It depends on NADP(+) as a cofactor.

It carries out the reaction ADP-D-glycero-beta-D-manno-heptose = ADP-L-glycero-beta-D-manno-heptose. It participates in nucleotide-sugar biosynthesis; ADP-L-glycero-beta-D-manno-heptose biosynthesis; ADP-L-glycero-beta-D-manno-heptose from D-glycero-beta-D-manno-heptose 7-phosphate: step 4/4. Catalyzes the interconversion between ADP-D-glycero-beta-D-manno-heptose and ADP-L-glycero-beta-D-manno-heptose via an epimerization at carbon 6 of the heptose. The polypeptide is ADP-L-glycero-D-manno-heptose-6-epimerase (Actinobacillus pleuropneumoniae serotype 5b (strain L20)).